The primary structure comprises 400 residues: Elongation factor Tu (400 aa).

In terms of domain architecture, tr-type G spans 10 to 209 (KPHVNIGTIG…VVDKYIPTPQ (200 aa)). The G1 stretch occupies residues 19–26 (GHVDHGKT). 19-26 (GHVDHGKT) is a binding site for GTP. T26 is a Mg(2+) binding site. The interval 60 to 64 (GITIN) is G2. The G3 stretch occupies residues 81–84 (DCPG). Residues 81–85 (DCPGH) and 136–139 (NKVD) each bind GTP. The interval 136-139 (NKVD) is G4. Residues 174-176 (SAL) form a G5 region.

This sequence belongs to the TRAFAC class translation factor GTPase superfamily. Classic translation factor GTPase family. EF-Tu/EF-1A subfamily. As to quaternary structure, monomer.

Its subcellular location is the cytoplasm. It carries out the reaction GTP + H2O = GDP + phosphate + H(+). GTP hydrolase that promotes the GTP-dependent binding of aminoacyl-tRNA to the A-site of ribosomes during protein biosynthesis. The polypeptide is Elongation factor Tu (Caldicellulosiruptor saccharolyticus (strain ATCC 43494 / DSM 8903 / Tp8T 6331)).